We begin with the raw amino-acid sequence, 780 residues long: Ribosome biogenesis protein BOP1 homolog (780 aa).

A compositionally biased stretch (basic residues) spans 1 to 11 (MTKKQAIKRKV). The segment at 1–155 (MTKKQAIKRK…DSDTSDEEDI (155 aa)) is disordered. The segment covering 17–26 (TNEQSSASEP) has biased composition (polar residues). Composition is skewed to acidic residues over residues 44 to 53 (EDTTDDEGID), 60 to 72 (SSED…DEEG), 83 to 113 (AEGD…DAEE), and 145 to 154 (EDSDTSDEED). WD repeat units follow at residues 441 to 482 (GHTD…RTIE), 484 to 522 (NDVV…KLLI), 566 to 608 (THFK…SQIP), 611 to 649 (KSKG…LIKK), 652 to 691 (TNSK…KPYQ), 695 to 734 (LHRN…DLLQ), and 750 to 780 (RDEF…RLYT).

Belongs to the WD repeat BOP1/ERB1 family.

It is found in the nucleus. The protein resides in the nucleolus. Its subcellular location is the nucleoplasm. In terms of biological role, required for maturation of ribosomal RNAs and formation of the large ribosomal subunit. The polypeptide is Ribosome biogenesis protein BOP1 homolog (Drosophila virilis (Fruit fly)).